Reading from the N-terminus, the 727-residue chain is Probable metal-nicotianamine transporter YSL14 (727 aa).

2 stretches are compositionally biased toward low complexity: residues 1–10 (MAQHTAAAAG) and 18–27 (AEAAAAAAAG). Residues 1–61 (MAQHTAAAAG…RNGGADDPDA (61 aa)) are disordered. Gly residues predominate over residues 45-54 (AGGGGGGRNG). The next 14 membrane-spanning stretches (helical) occupy residues 84-104 (AFVV…KLNL), 107-127 (GIIP…VRLW), 152-172 (CVVS…LFGM), 194-214 (LGWM…ALVP), 256-276 (LGKY…YTAG), 314-334 (IVNV…WPLI), 359-379 (VFIS…KVLI), 432-452 (VAYG…PEIF), 460-480 (ILVA…GSGL), 492-512 (LAIF…LVGL), 546-566 (FISQ…VFWL), 604-624 (PENC…INLI), 646-666 (FYIG…LFVW), and 681-701 (VASG…ILAL).

It belongs to the YSL (TC 2.A.67.2) family. Expressed in leaves and at low levels in roots.

It localises to the membrane. May be involved in the transport of nicotianamine-chelated metals. This is Probable metal-nicotianamine transporter YSL14 (YSL14) from Oryza sativa subsp. japonica (Rice).